The following is a 126-amino-acid chain: Methylglyoxal synthase (126 aa).

The 126-residue stretch at 1-126 (MAERQKIALI…ADRLLPVITE (126 aa)) folds into the MGS-like domain. Substrate contacts are provided by residues histidine 12, lysine 16, 38–41 (TGTT), and 59–60 (SG). Catalysis depends on aspartate 65, which acts as the Proton donor/acceptor. Residue histidine 92 participates in substrate binding.

This sequence belongs to the methylglyoxal synthase family.

The catalysed reaction is dihydroxyacetone phosphate = methylglyoxal + phosphate. Functionally, catalyzes the formation of methylglyoxal from dihydroxyacetone phosphate. This chain is Methylglyoxal synthase, found in Allorhizobium ampelinum (strain ATCC BAA-846 / DSM 112012 / S4) (Agrobacterium vitis (strain S4)).